The following is a 197-amino-acid chain: MKLIVGMTGATGAPLGVALLQALREMPNVETHLVMSKWAKTTIELETPYSARDVAALADFSHNPADQAATISSGSFRTDGMIVIPCSMKTLAGIRAGYADGLVGRAADVVLKEGRKLVLVPREMPLSTIHLENMLALSRMGVAMVPPMPAFYNHPETVDDIVHHVVARVLDQFGLEHPYARRWQGLPQARNFSQENE.

Residues 9–11 (GAT), serine 36, 87–90 (SMKT), and arginine 122 contribute to the FMN site.

It belongs to the UbiX/PAD1 family. YclB subfamily. In terms of assembly, homododecamer.

It catalyses the reaction dimethylallyl phosphate + FMNH2 = prenylated FMNH2 + phosphate. Functionally, involved in the non-oxidative decarboxylation and detoxification of phenolic derivatives under both aerobic and anaerobic conditions. Flavin prenyltransferase that catalyzes the synthesis of the prenylated FMN cofactor (prenyl-FMN) for phenolic acid decarboxylase. This Escherichia coli O157:H7 protein is Probable UbiX-like flavin prenyltransferase.